Here is a 227-residue protein sequence, read N- to C-terminus: Ribosomal RNA large subunit methyltransferase E (227 aa).

The S-adenosyl-L-methionine site is built by Gly78, Trp80, Asp103, Asp119, and Asp143. Lys183 serves as the catalytic Proton acceptor.

The protein belongs to the class I-like SAM-binding methyltransferase superfamily. RNA methyltransferase RlmE family.

The protein resides in the cytoplasm. The catalysed reaction is uridine(2552) in 23S rRNA + S-adenosyl-L-methionine = 2'-O-methyluridine(2552) in 23S rRNA + S-adenosyl-L-homocysteine + H(+). Specifically methylates the uridine in position 2552 of 23S rRNA at the 2'-O position of the ribose in the fully assembled 50S ribosomal subunit. This chain is Ribosomal RNA large subunit methyltransferase E, found in Rickettsia conorii (strain ATCC VR-613 / Malish 7).